A 104-amino-acid polypeptide reads, in one-letter code: uncharacterized protein (104 aa).

Positions 1–23 are cleaved as a signal peptide; that stretch reads MDIHDYVELIALAFWVISVVSVG.

This is an uncharacterized protein from Lactobacillus helveticus (Lactobacillus suntoryeus).